The following is a 348-amino-acid chain: Holliday junction branch migration complex subunit RuvB (348 aa).

The segment at 1–183 is large ATPase domain (RuvB-L); it reads MAPQPRRLIA…FGIPIRLEYY (183 aa). Residues leucine 22, arginine 23, glycine 64, lysine 67, threonine 68, threonine 69, 130–132, arginine 173, tyrosine 183, and arginine 220 each bind ATP; that span reads EDF. A Mg(2+)-binding site is contributed by threonine 68. Residues 184-254 are small ATPAse domain (RuvB-S); the sequence is TVEELECIVR…VADRALRLLD (71 aa). The head domain (RuvB-H) stretch occupies residues 257–348; it reads HIGLDQMDRR…FQLFSEGGEE (92 aa). DNA is bound by residues arginine 293, arginine 312, and arginine 317.

Belongs to the RuvB family. Homohexamer. Forms an RuvA(8)-RuvB(12)-Holliday junction (HJ) complex. HJ DNA is sandwiched between 2 RuvA tetramers; dsDNA enters through RuvA and exits via RuvB. An RuvB hexamer assembles on each DNA strand where it exits the tetramer. Each RuvB hexamer is contacted by two RuvA subunits (via domain III) on 2 adjacent RuvB subunits; this complex drives branch migration. In the full resolvosome a probable DNA-RuvA(4)-RuvB(12)-RuvC(2) complex forms which resolves the HJ.

The protein localises to the cytoplasm. The catalysed reaction is ATP + H2O = ADP + phosphate + H(+). Functionally, the RuvA-RuvB-RuvC complex processes Holliday junction (HJ) DNA during genetic recombination and DNA repair, while the RuvA-RuvB complex plays an important role in the rescue of blocked DNA replication forks via replication fork reversal (RFR). RuvA specifically binds to HJ cruciform DNA, conferring on it an open structure. The RuvB hexamer acts as an ATP-dependent pump, pulling dsDNA into and through the RuvAB complex. RuvB forms 2 homohexamers on either side of HJ DNA bound by 1 or 2 RuvA tetramers; 4 subunits per hexamer contact DNA at a time. Coordinated motions by a converter formed by DNA-disengaged RuvB subunits stimulates ATP hydrolysis and nucleotide exchange. Immobilization of the converter enables RuvB to convert the ATP-contained energy into a lever motion, pulling 2 nucleotides of DNA out of the RuvA tetramer per ATP hydrolyzed, thus driving DNA branch migration. The RuvB motors rotate together with the DNA substrate, which together with the progressing nucleotide cycle form the mechanistic basis for DNA recombination by continuous HJ branch migration. Branch migration allows RuvC to scan DNA until it finds its consensus sequence, where it cleaves and resolves cruciform DNA. This chain is Holliday junction branch migration complex subunit RuvB, found in Methylocella silvestris (strain DSM 15510 / CIP 108128 / LMG 27833 / NCIMB 13906 / BL2).